The sequence spans 495 residues: Pleckstrin homology domain-containing family O member 2 (495 aa).

The PH domain maps to 18-120 (TADKAGWIKK…WIKALNEGIN (103 aa)). Phosphoserine is present on residues serine 165 and serine 168. The segment at 171 to 411 (LSRLDLDVPD…ESPQHPRLPK (241 aa)) is disordered. A compositionally biased stretch (pro residues) spans 198-213 (QEPPRALMPPVKPSPG). At threonine 233 the chain carries Phosphothreonine. Residues 235–244 (DSASSGANPE) are compositionally biased toward polar residues. Phosphoserine occurs at positions 236, 238, 239, 274, and 292. Residue threonine 296 is modified to Phosphothreonine. The segment covering 324-335 (SGVDASGSSQSS) has biased composition (low complexity). The segment covering 336 to 350 (EAPETTSPEPTQVSV) has biased composition (polar residues). Position 395 is a phosphoserine (serine 395). Residues 399 to 411 (LLRESPQHPRLPK) show a composition bias toward basic and acidic residues. Residues 444 to 469 (CAESLLSQAVEQLRQATQVLQEMRDL) are a coiled coil.

The sequence is that of Pleckstrin homology domain-containing family O member 2 (Plekho2) from Mus musculus (Mouse).